We begin with the raw amino-acid sequence, 663 residues long: Putative glucosamine-6-phosphate deaminase-like protein BT_0258 (663 aa).

The segment at 1–290 is glucosamine-6-phosphate deaminase-like; that stretch reads MKTNLSSQIT…NLTRIQRPWL (290 aa). Glutamate 184 is an active-site residue.

It in the N-terminal section; belongs to the glucosamine/galactosamine-6-phosphate isomerase family. NagB subfamily.

This is Putative glucosamine-6-phosphate deaminase-like protein BT_0258 from Bacteroides thetaiotaomicron (strain ATCC 29148 / DSM 2079 / JCM 5827 / CCUG 10774 / NCTC 10582 / VPI-5482 / E50).